Reading from the N-terminus, the 61-residue chain is Small ribosomal subunit protein uS14 (61 aa).

Cys24, Cys27, Cys40, and Cys43 together coordinate Zn(2+).

It belongs to the universal ribosomal protein uS14 family. Zinc-binding uS14 subfamily. In terms of assembly, part of the 30S ribosomal subunit. Contacts proteins S3 and S10. Zn(2+) is required as a cofactor.

Functionally, binds 16S rRNA, required for the assembly of 30S particles and may also be responsible for determining the conformation of the 16S rRNA at the A site. This Nitratidesulfovibrio vulgaris (strain DSM 19637 / Miyazaki F) (Desulfovibrio vulgaris) protein is Small ribosomal subunit protein uS14.